The following is a 110-amino-acid chain: UPF0122 protein STER_0914 (110 aa).

Belongs to the UPF0122 family.

Functionally, might take part in the signal recognition particle (SRP) pathway. This is inferred from the conservation of its genetic proximity to ftsY/ffh. May be a regulatory protein. The protein is UPF0122 protein STER_0914 of Streptococcus thermophilus (strain ATCC BAA-491 / LMD-9).